A 1070-amino-acid chain; its full sequence is DNA-directed RNA polymerase subunit beta (1070 aa).

It belongs to the RNA polymerase beta chain family. In terms of assembly, in plastids the minimal PEP RNA polymerase catalytic core is composed of four subunits: alpha, beta, beta', and beta''. When a (nuclear-encoded) sigma factor is associated with the core the holoenzyme is formed, which can initiate transcription.

The protein localises to the plastid. The protein resides in the chloroplast. The catalysed reaction is RNA(n) + a ribonucleoside 5'-triphosphate = RNA(n+1) + diphosphate. Its function is as follows. DNA-dependent RNA polymerase catalyzes the transcription of DNA into RNA using the four ribonucleoside triphosphates as substrates. This is DNA-directed RNA polymerase subunit beta from Morus indica (Mulberry).